A 157-amino-acid chain; its full sequence is NADPH-dependent 7-cyano-7-deazaguanine reductase (157 aa).

Catalysis depends on Cys-55, which acts as the Thioimide intermediate. The Proton donor role is filled by Asp-62. Substrate-binding positions include 77–79 (VES) and 96–97 (HE).

The protein belongs to the GTP cyclohydrolase I family. QueF type 1 subfamily.

It is found in the cytoplasm. It carries out the reaction 7-aminomethyl-7-carbaguanine + 2 NADP(+) = 7-cyano-7-deazaguanine + 2 NADPH + 3 H(+). It participates in tRNA modification; tRNA-queuosine biosynthesis. Its function is as follows. Catalyzes the NADPH-dependent reduction of 7-cyano-7-deazaguanine (preQ0) to 7-aminomethyl-7-deazaguanine (preQ1). The chain is NADPH-dependent 7-cyano-7-deazaguanine reductase from Neisseria meningitidis serogroup A / serotype 4A (strain DSM 15465 / Z2491).